We begin with the raw amino-acid sequence, 487 residues long: Argininosuccinate lyase (487 aa).

This sequence belongs to the lyase 1 family. Argininosuccinate lyase subfamily.

Its subcellular location is the cytoplasm. It carries out the reaction 2-(N(omega)-L-arginino)succinate = fumarate + L-arginine. The protein operates within amino-acid biosynthesis; L-arginine biosynthesis; L-arginine from L-ornithine and carbamoyl phosphate: step 3/3. The sequence is that of Argininosuccinate lyase from Methanothrix thermoacetophila (strain DSM 6194 / JCM 14653 / NBRC 101360 / PT) (Methanosaeta thermophila).